We begin with the raw amino-acid sequence, 213 residues long: Large ribosomal subunit protein uL3 (213 aa).

Belongs to the universal ribosomal protein uL3 family. Part of the 50S ribosomal subunit. Forms a cluster with proteins L14 and L19.

Functionally, one of the primary rRNA binding proteins, it binds directly near the 3'-end of the 23S rRNA, where it nucleates assembly of the 50S subunit. The protein is Large ribosomal subunit protein uL3 of Kosmotoga olearia (strain ATCC BAA-1733 / DSM 21960 / TBF 19.5.1).